Reading from the N-terminus, the 377-residue chain is Short chain dehydrogenase gsfE (377 aa).

Asp-89, Gln-121, Tyr-226, Ala-266, and Ser-268 together coordinate NADP(+). Residue Tyr-226 is the Proton donor of the active site.

It belongs to the short-chain dehydrogenases/reductases (SDR) family. Highly divergent.

The enzyme catalyses dehydrogriseofulvin + NADPH + H(+) = griseofulvin + NADP(+). The protein operates within secondary metabolite biosynthesis; terpenoid biosynthesis. In terms of biological role, short chain dehydrogenase; part of the gene cluster that mediates the biosynthesis of griseofulvin, an important antifungal drug that has been in use for a long time for treating dermatophyte infections. The first step of the pathway is the formation of the heptaketide backbone by gsfA which is initiated by priming with acetyl-CoA, followed by sequential condensations of 6 malonyl-CoA units. The resulting benzophenone can undergo a spontaneous dehydration to form norlichexanthone. However, the true precursor for the griseofulvin biosynthesis is not norlichexanthone, but the heptaketide benzophenone that is O-methylated at 3-OH by gsfB to produce griseophenone D which is further methylated at 9-OH by gsfC to yield griseophenone C. Griseophenone C is then substrate of halogenase gsfI which is responsible for the regio-specific chlorination at the C13 position to form griseophenone B. The cytochrome P450 gsfF catalyzes the coupling of orcinol and phloroglucinol rings in griseophenone B to form desmethyl-dehydrogriseofulvin A which is further methylated at 5-OH by gsfD to yield dehydrogriseofulvin. Finally, gsfE performs stereospecific reduction of enone 18 of dehydrogriseofulvin to afford the final product griseofulvin. In Penicillium aethiopicum, this protein is Short chain dehydrogenase gsfE.